Consider the following 93-residue polypeptide: MKKTLMLLAMVVALVILPFFINHGGEYGGSDGEAERQIQAIAPQYKPWFQPLYEPASGEIESLLFTLQGSLGAAVIFYILGYCKGKQRRDDRA.

A run of 2 helical transmembrane segments spans residues 5–25 (LMLL…NHGG) and 63–83 (LLFT…LGYC).

It belongs to the CbiN family. In terms of assembly, forms an energy-coupling factor (ECF) transporter complex composed of an ATP-binding protein (A component, CbiO), a transmembrane protein (T component, CbiQ) and 2 possible substrate-capture proteins (S components, CbiM and CbiN) of unknown stoichimetry.

The protein localises to the cell inner membrane. Its pathway is cofactor biosynthesis; adenosylcobalamin biosynthesis. Functionally, part of the energy-coupling factor (ECF) transporter complex CbiMNOQ involved in cobalt import. The protein is Cobalt transport protein CbiN of Salmonella newport (strain SL254).